The primary structure comprises 205 residues: Putative lipoprotein LppC (205 aa).

Positions 1–27 are cleaved as a signal peptide; it reads MESPMTSTLHRTPLATAGLALVVALGG. Residue C28 is the site of N-palmitoyl cysteine attachment. A lipid anchor (S-diacylglycerol cysteine) is attached at C28. The segment at 126–145 is disordered; that stretch reads GSTADGQTPAGGHSVPNSGG.

Belongs to the UPF0098 family.

The protein resides in the cell membrane. This Mycobacterium tuberculosis (strain CDC 1551 / Oshkosh) protein is Putative lipoprotein LppC (lppC).